A 369-amino-acid polypeptide reads, in one-letter code: Methylthioribose-1-phosphate isomerase (369 aa).

The residue at position 1 (methionine 1) is an N-acetylmethionine. At arginine 158 the chain carries Omega-N-methylarginine. Aspartate 248 functions as the Proton donor in the catalytic mechanism. Phosphoserine is present on serine 366.

It belongs to the eIF-2B alpha/beta/delta subunits family. MtnA subfamily.

Its subcellular location is the cytoplasm. The protein localises to the nucleus. The enzyme catalyses 5-(methylsulfanyl)-alpha-D-ribose 1-phosphate = 5-(methylsulfanyl)-D-ribulose 1-phosphate. It participates in amino-acid biosynthesis; L-methionine biosynthesis via salvage pathway; L-methionine from S-methyl-5-thio-alpha-D-ribose 1-phosphate: step 1/6. Its function is as follows. Catalyzes the interconversion of methylthioribose-1-phosphate (MTR-1-P) into methylthioribulose-1-phosphate (MTRu-1-P). The polypeptide is Methylthioribose-1-phosphate isomerase (Mri1) (Mus musculus (Mouse)).